Reading from the N-terminus, the 956-residue chain is Translation initiation factor IF-2 (956 aa).

3 disordered regions span residues Q53–I102, G116–A315, and T334–E371. Residues K58–I102 are compositionally biased toward basic and acidic residues. Residues V142–S158 show a composition bias toward polar residues. Basic and acidic residues predominate over residues S166 to S186. Over residues T197–T208 the composition is skewed to low complexity. Residues Q209 to N229 are compositionally biased toward polar residues. The span at I240 to N257 shows a compositional bias: low complexity. Over residues G343 to R352 the composition is skewed to basic residues. Basic and acidic residues predominate over residues D353–E371. Residues T454 to D622 enclose the tr-type G domain. A G1 region spans residues G463 to T470. G463–T470 provides a ligand contact to GTP. The tract at residues G488–H492 is G2. The G3 stretch occupies residues D510–G513. Residues D510–H514 and N564–D567 each bind GTP. Positions N564–D567 are G4. The segment at S600–K602 is G5.

This sequence belongs to the TRAFAC class translation factor GTPase superfamily. Classic translation factor GTPase family. IF-2 subfamily.

The protein localises to the cytoplasm. In terms of biological role, one of the essential components for the initiation of protein synthesis. Protects formylmethionyl-tRNA from spontaneous hydrolysis and promotes its binding to the 30S ribosomal subunits. Also involved in the hydrolysis of GTP during the formation of the 70S ribosomal complex. In Flavobacterium johnsoniae (strain ATCC 17061 / DSM 2064 / JCM 8514 / BCRC 14874 / CCUG 350202 / NBRC 14942 / NCIMB 11054 / UW101) (Cytophaga johnsonae), this protein is Translation initiation factor IF-2.